A 155-amino-acid polypeptide reads, in one-letter code: MRIGLGYDVHKLVENRPLIIGGVTIPHDKGLLGHSDADVLVHAIMDALLGAAALGDIGKHFPDSDKNFKNISSLLLLSKVKDLINKEGYKIVNIDCTIIAQKPKMLYHIDAMKKNICKCLKLDNNMLNIKATTEEGLGFTGKEEGISANAICLLN.

Positions 8 and 10 each coordinate a divalent metal cation. Residues 8-10 (DVH) and 34-35 (HS) each bind 4-CDP-2-C-methyl-D-erythritol 2-phosphate. Position 42 (His42) interacts with a divalent metal cation. 4-CDP-2-C-methyl-D-erythritol 2-phosphate-binding positions include 56-58 (DIG), 61-65 (FPDSD), 100-106 (AQKPKML), 132-135 (TTEE), Phe139, and Lys142.

It belongs to the IspF family. Homotrimer. It depends on a divalent metal cation as a cofactor.

It carries out the reaction 4-CDP-2-C-methyl-D-erythritol 2-phosphate = 2-C-methyl-D-erythritol 2,4-cyclic diphosphate + CMP. Its pathway is isoprenoid biosynthesis; isopentenyl diphosphate biosynthesis via DXP pathway; isopentenyl diphosphate from 1-deoxy-D-xylulose 5-phosphate: step 4/6. Involved in the biosynthesis of isopentenyl diphosphate (IPP) and dimethylallyl diphosphate (DMAPP), two major building blocks of isoprenoid compounds. Catalyzes the conversion of 4-diphosphocytidyl-2-C-methyl-D-erythritol 2-phosphate (CDP-ME2P) to 2-C-methyl-D-erythritol 2,4-cyclodiphosphate (ME-CPP) with a corresponding release of cytidine 5-monophosphate (CMP). The chain is 2-C-methyl-D-erythritol 2,4-cyclodiphosphate synthase from Clostridium botulinum (strain 657 / Type Ba4).